We begin with the raw amino-acid sequence, 101 residues long: MYAIVKTGGKQYKVAEGDFVKVEKIEGEPGSSVALTPILLVDGADVTTKAADLAKVSVTAEIVEAVKGPKIKILKYKNKTGYKKRQGHRQQLTVLKITGIK.

The protein belongs to the bacterial ribosomal protein bL21 family. As to quaternary structure, part of the 50S ribosomal subunit. Contacts protein L20.

Functionally, this protein binds to 23S rRNA in the presence of protein L20. The chain is Large ribosomal subunit protein bL21 from Corynebacterium diphtheriae (strain ATCC 700971 / NCTC 13129 / Biotype gravis).